A 358-amino-acid polypeptide reads, in one-letter code: Mannonate dehydratase (358 aa).

Belongs to the mannonate dehydratase family. Requires Fe(2+) as cofactor. It depends on Mn(2+) as a cofactor.

The enzyme catalyses D-mannonate = 2-dehydro-3-deoxy-D-gluconate + H2O. The protein operates within carbohydrate metabolism; pentose and glucuronate interconversion. Functionally, catalyzes the dehydration of D-mannonate. The protein is Mannonate dehydratase of Lachnoclostridium phytofermentans (strain ATCC 700394 / DSM 18823 / ISDg) (Clostridium phytofermentans).